We begin with the raw amino-acid sequence, 376 residues long: WW domain-binding protein 4 (376 aa).

Residues 11–42 (KFCDYCKCWIADNRPSVEFHERGKNHKENVAR) form a Matrin-type zinc finger. A compositionally biased stretch (polar residues) spans 94-111 (PTVSPVISTVQPTPTSNQ). Disordered stretches follow at residues 94–127 (PTVS…ASKG) and 192–324 (WEKP…ECLS). Residues 114–123 (EKKKKKKKKE) show a composition bias toward basic residues. 2 consecutive WW domains span residues 123-156 (EASK…KPEG) and 164-197 (TAAK…KPED). A compositionally biased stretch (basic and acidic residues) spans 219-272 (EDAKSSDSHSDSEGEQKKAGEASTETKKLIIKFKEKNKSTEKRIGPEIQKEKST). Residues serine 228 and serine 230 each carry the phosphoserine modification. Residues 357 to 375 (KKRRLENGKSRNLRQRGDD) are interaction with SNRNP200.

As to quaternary structure, component of the spliceosome B complex. Associated with U2 snRNPs. Binds splicing factors SNRPB, SNRPC and SF1. Interacts via the WW domains with the Pro-rich domains of KHDRBS1/SAM68. Interacts via the WW domains with the Pro-rich domains of WBP11. Interacts with SNRNP200.

It is found in the nucleus. Its subcellular location is the nucleus speckle. Its function is as follows. Involved in pre-mRNA splicing as a component of the spliceosome. May play a role in cross-intron bridging of U1 and U2 snRNPs in the mammalian A complex. In Mus musculus (Mouse), this protein is WW domain-binding protein 4 (Wbp4).